The sequence spans 874 residues: Valine--tRNA ligase (874 aa).

Residues 1-10 (MTENSQQQPP) are compositionally biased toward polar residues. The segment at 1–23 (MTENSQQQPPASEPELPTQYAPA) is disordered. The 'HIGH' region signature appears at 57–67 (PNVTGSLHLGH). The 'KMSKS' region motif lies at 531–535 (KMSKS). K534 contacts ATP. Residues 806-871 (IDIVAERKRL…ARIQAQLDRM (66 aa)) adopt a coiled-coil conformation.

It belongs to the class-I aminoacyl-tRNA synthetase family. ValS type 1 subfamily. In terms of assembly, monomer.

The protein resides in the cytoplasm. It catalyses the reaction tRNA(Val) + L-valine + ATP = L-valyl-tRNA(Val) + AMP + diphosphate. In terms of biological role, catalyzes the attachment of valine to tRNA(Val). As ValRS can inadvertently accommodate and process structurally similar amino acids such as threonine, to avoid such errors, it has a 'posttransfer' editing activity that hydrolyzes mischarged Thr-tRNA(Val) in a tRNA-dependent manner. The protein is Valine--tRNA ligase of Streptomyces avermitilis (strain ATCC 31267 / DSM 46492 / JCM 5070 / NBRC 14893 / NCIMB 12804 / NRRL 8165 / MA-4680).